The chain runs to 439 residues: Guanine deaminase (439 aa).

Residues His82 and His84 each coordinate Zn(2+). Residues 84 to 87 (HYPQ), 209 to 210 (RF), 237 to 240 (HLCE), and Asp327 contribute to the substrate site. Residues His237 and Asp327 each contribute to the Zn(2+) site.

It belongs to the metallo-dependent hydrolases superfamily. ATZ/TRZ family. Zn(2+) is required as a cofactor.

The enzyme catalyses guanine + H2O + H(+) = xanthine + NH4(+). It participates in purine metabolism; guanine degradation; xanthine from guanine: step 1/1. Catalyzes the hydrolytic deamination of guanine, producing xanthine and ammonia. The chain is Guanine deaminase (guaD) from Escherichia coli (strain K12).